We begin with the raw amino-acid sequence, 133 residues long: MTLNLCVLTPNRIVWDSEVKEIILSTNSGQIGVLPNHAPIATAVDIGILRIRFNDQWLTMALMGGFARIGNNEITILVNDAEKSSDIDPQEAQQTLEIAEANLRKAESKRQTIEANLALRRARTRVEVINAIS.

This sequence belongs to the ATPase epsilon chain family. In terms of assembly, F-type ATPases have 2 components, CF(1) - the catalytic core - and CF(0) - the membrane proton channel. CF(1) has five subunits: alpha(3), beta(3), gamma(1), delta(1), epsilon(1). CF(0) has three main subunits: a, b and c.

It is found in the plastid. The protein localises to the chloroplast thylakoid membrane. Its function is as follows. Produces ATP from ADP in the presence of a proton gradient across the membrane. The polypeptide is ATP synthase epsilon chain, chloroplastic (Citrus sinensis (Sweet orange)).